The following is a 149-amino-acid chain: Large-conductance mechanosensitive channel (149 aa).

3 helical membrane-spanning segments follow: residues 16-36 (VMDL…VNSV), 40-60 (LIMP…KFIL), and 89-109 (GSFI…FMMV).

It belongs to the MscL family. Homopentamer.

The protein resides in the cell inner membrane. Its function is as follows. Channel that opens in response to stretch forces in the membrane lipid bilayer. May participate in the regulation of osmotic pressure changes within the cell. The sequence is that of Large-conductance mechanosensitive channel from Paraburkholderia phymatum (strain DSM 17167 / CIP 108236 / LMG 21445 / STM815) (Burkholderia phymatum).